The sequence spans 90 residues: Probable Fe(2+)-trafficking protein (90 aa).

It belongs to the Fe(2+)-trafficking protein family. As to quaternary structure, monomer.

Functionally, could be a mediator in iron transactions between iron acquisition and iron-requiring processes, such as synthesis and/or repair of Fe-S clusters in biosynthetic enzymes. This is Probable Fe(2+)-trafficking protein from Proteus mirabilis (strain HI4320).